The chain runs to 463 residues: L-seryl-tRNA(Sec) selenium transferase (463 aa).

K295 carries the N6-(pyridoxal phosphate)lysine modification.

The protein belongs to the SelA family. Homodecamer; pentamer of dimers. Binds only one seryl-tRNA(Sec) per dimer. Pyridoxal 5'-phosphate is required as a cofactor.

It localises to the cytoplasm. The enzyme catalyses L-seryl-tRNA(Sec) + selenophosphate + H(+) = L-selenocysteinyl-tRNA(Sec) + phosphate. Its pathway is aminoacyl-tRNA biosynthesis; selenocysteinyl-tRNA(Sec) biosynthesis; selenocysteinyl-tRNA(Sec) from L-seryl-tRNA(Sec) (bacterial route): step 1/1. In terms of biological role, converts seryl-tRNA(Sec) to selenocysteinyl-tRNA(Sec) required for selenoprotein biosynthesis. This Escherichia fergusonii (strain ATCC 35469 / DSM 13698 / CCUG 18766 / IAM 14443 / JCM 21226 / LMG 7866 / NBRC 102419 / NCTC 12128 / CDC 0568-73) protein is L-seryl-tRNA(Sec) selenium transferase.